The chain runs to 904 residues: Anoctamin-5 (904 aa).

The Cytoplasmic segment spans residues 1 to 290; it reads MVEQEGLTAK…HLIRNYFGEK (290 aa). A helical transmembrane segment spans residues 291–311; sequence IGIYFVFLGYYTEMLLFAALV. The Extracellular segment spans residues 312–371; sequence GLACFIYGLLSMENNRTSTEICDPDIGGQMIMCPLCDEVCDYWRLNTTCLHSKFSHLFDN. 3 N-linked (GlcNAc...) asparagine glycosylation sites follow: Asn-326, Asn-357, and Asn-371. A helical transmembrane segment spans residues 372–392; that stretch reads ESTVFFALFMGIWVTLFLEFW. The Cytoplasmic portion of the chain corresponds to 393 to 453; it reads KQRQARLEYE…CHRIPWYFVS (61 aa). Residues 454 to 474 form a helical membrane-spanning segment; sequence GTTVTFGMALLLSSMVSILIY. The Extracellular portion of the chain corresponds to 475-502; that stretch reads RLSVFATFASFMESEATLQSVKSFFTPQ. A helical membrane pass occupies residues 503–523; sequence LATALSGSCLNCIVILILNFF. The Cytoplasmic portion of the chain corresponds to 524–548; the sequence is YEKISAWITKMEIPRTHQEYESSLT. The chain crosses the membrane as a helical span at residues 549-569; it reads LKMFLFQFVNYYSSCFYVAFF. Residues 570-667 lie on the Extracellular side of the membrane; that stretch reads KGKFVGYPGS…RGLFYEYLET (98 aa). A helical membrane pass occupies residues 668-688; that stretch reads VIQFGFATLFVASFPLAPLFA. The Cytoplasmic segment spans residues 689 to 723; sequence LMNNIMGIRVDAWKLTTQYRRPVAAKAHSIGVWQD. A helical membrane pass occupies residues 724–744; it reads ILFGMAIVSVATNAFIVSFTS. Over 745–825 the chain is Extracellular; it reads DIIPRLVYFY…FWHVLAAKMT (81 aa). Residues Asn-759, Asn-769, and Asn-782 are each glycosylated (N-linked (GlcNAc...) asparagine). Residues 826-846 traverse the membrane as a helical segment; it reads FIIVMEHVVFLFKFLLAWLIP. Over 847 to 904 the chain is Cytoplasmic; that stretch reads DVPKDVVEKIKREKLMTIKIIHDFELNKLKENLDVEYGNIMKNVLVDEDNSLKAKTTV.

The protein belongs to the anoctamin family. As to expression, highly expressed in skeletal muscle, bone tissues and thyroid gland.

It localises to the endoplasmic reticulum membrane. The protein localises to the cell membrane. Plays a role in plasma membrane repair in a process involving annexins. Does not exhibit calcium-activated chloride channel (CaCC) activity. This chain is Anoctamin-5 (Ano5), found in Mus musculus (Mouse).